A 587-amino-acid polypeptide reads, in one-letter code: Arginine--tRNA ligase (587 aa).

A 'HIGH' region motif is present at residues 126–136 (ANPTGPLHVGH).

It belongs to the class-I aminoacyl-tRNA synthetase family. In terms of assembly, monomer.

It is found in the cytoplasm. It catalyses the reaction tRNA(Arg) + L-arginine + ATP = L-arginyl-tRNA(Arg) + AMP + diphosphate. The polypeptide is Arginine--tRNA ligase (Aromatoleum aromaticum (strain DSM 19018 / LMG 30748 / EbN1) (Azoarcus sp. (strain EbN1))).